The sequence spans 245 residues: Cytochrome c oxidase subunit 2 (245 aa).

At 1–36 (MYMLNNMLNDVPTPWGMFFQDSATPNMEGMMELHNN) the chain is on the mitochondrial intermembrane side. A helical transmembrane segment spans residues 37–56 (VMFYLCMMLGFVSYMLYNML). Topologically, residues 57–76 (TTYNHSVLPYKYLYHGQFIE) are mitochondrial matrix. A helical transmembrane segment spans residues 77–101 (IVWTTFPAMILLIIAFPSFILLYIC). Residues 102-245 (DEVIAPAMTI…GEFLAWIDEQ (144 aa)) are Mitochondrial intermembrane-facing. Cu cation contacts are provided by His-180, Cys-215, Glu-217, Cys-219, His-223, and Met-226. Position 217 (Glu-217) interacts with Mg(2+).

This sequence belongs to the cytochrome c oxidase subunit 2 family. In terms of assembly, component of the cytochrome c oxidase (complex IV, CIV), a multisubunit enzyme composed of a catalytic core of 3 subunits and several supernumerary subunits. The complex exists as a monomer or a dimer and forms supercomplexes (SCs) in the inner mitochondrial membrane with ubiquinol-cytochrome c oxidoreductase (cytochrome b-c1 complex, complex III, CIII). It depends on Cu cation as a cofactor.

It is found in the mitochondrion inner membrane. The catalysed reaction is 4 Fe(II)-[cytochrome c] + O2 + 8 H(+)(in) = 4 Fe(III)-[cytochrome c] + 2 H2O + 4 H(+)(out). Its function is as follows. Component of the cytochrome c oxidase, the last enzyme in the mitochondrial electron transport chain which drives oxidative phosphorylation. The respiratory chain contains 3 multisubunit complexes succinate dehydrogenase (complex II, CII), ubiquinol-cytochrome c oxidoreductase (cytochrome b-c1 complex, complex III, CIII) and cytochrome c oxidase (complex IV, CIV), that cooperate to transfer electrons derived from NADH and succinate to molecular oxygen, creating an electrochemical gradient over the inner membrane that drives transmembrane transport and the ATP synthase. Cytochrome c oxidase is the component of the respiratory chain that catalyzes the reduction of oxygen to water. Electrons originating from reduced cytochrome c in the intermembrane space (IMS) are transferred via the dinuclear copper A center (CU(A)) of subunit 2 and heme A of subunit 1 to the active site in subunit 1, a binuclear center (BNC) formed by heme A3 and copper B (CU(B)). The BNC reduces molecular oxygen to 2 water molecules using 4 electrons from cytochrome c in the IMS and 4 protons from the mitochondrial matrix. This is Cytochrome c oxidase subunit 2 (COX2) from Dekkera bruxellensis (Brettanomyces custersii).